The following is a 96-amino-acid chain: MNIRPLHDRVIIKREEVETRSAGGIVLTGSAATKSTRAKVLAVGKGRILENGTVQPLDVKVGDTVIFNDGYGVKNEKIDGEEVLIISENDILAIVE.

Belongs to the GroES chaperonin family. In terms of assembly, heptamer of 7 subunits arranged in a ring. Interacts with the chaperonin GroEL.

It localises to the cytoplasm. Functionally, together with the chaperonin GroEL, plays an essential role in assisting protein folding. The GroEL-GroES system forms a nano-cage that allows encapsulation of the non-native substrate proteins and provides a physical environment optimized to promote and accelerate protein folding. GroES binds to the apical surface of the GroEL ring, thereby capping the opening of the GroEL channel. This chain is Co-chaperonin GroES, found in Haemophilus influenzae (strain PittGG).